The primary structure comprises 301 residues: Cardiolipin synthase (CMP-forming) (301 aa).

Residues S70–Q93 are disordered. Over residues G71–Q93 the composition is skewed to low complexity. Transmembrane regions (helical) follow at residues I109–I129, F133–I153, I190–V212, L250–L270, and I272–G292.

Belongs to the CDP-alcohol phosphatidyltransferase class-I family. It depends on a divalent metal cation as a cofactor. In terms of tissue distribution, highly expressed in tissues such as heart, skeletal muscle and liver.

The protein localises to the mitochondrion inner membrane. It catalyses the reaction a CDP-1,2-diacyl-sn-glycerol + a 1,2-diacyl-sn-glycero-3-phospho-(1'-sn-glycerol) = a cardiolipin + CMP + H(+). In terms of biological role, catalyzes the synthesis of cardiolipin (CL) (diphosphatidylglycerol) by specifically transferring a phosphatidyl group from CDP-diacylglycerol to phosphatidylglycerol (PG). CL is a key phospholipid in mitochondrial membranes and plays important roles in maintaining the functional integrity and dynamics of mitochondria under both optimal and stress conditions. The chain is Cardiolipin synthase (CMP-forming) (CRLS1) from Homo sapiens (Human).